The chain runs to 193 residues: dCTP deaminase (193 aa).

DCTP is bound by residues 110–115 (RSSLAR), Asp-128, 136–138 (VLE), Tyr-171, Lys-178, and Gln-182. Residue Glu-138 is the Proton donor/acceptor of the active site. The tract at residues 171-193 (YNKRKNAKYKDQQDAVASRISQD) is disordered.

The protein belongs to the dCTP deaminase family. As to quaternary structure, homotrimer.

It catalyses the reaction dCTP + H2O + H(+) = dUTP + NH4(+). It functions in the pathway pyrimidine metabolism; dUMP biosynthesis; dUMP from dCTP (dUTP route): step 1/2. Functionally, catalyzes the deamination of dCTP to dUTP. The protein is dCTP deaminase of Shewanella oneidensis (strain ATCC 700550 / JCM 31522 / CIP 106686 / LMG 19005 / NCIMB 14063 / MR-1).